The chain runs to 367 residues: Trans-enoyl reductase opdC (367 aa).

NADP(+) is bound by residues 47–50 (YDAK), 199–202 (SPHN), Tyr-217, 264–265 (LD), and 353–354 (IT).

Belongs to the zinc-containing alcohol dehydrogenase family. In terms of assembly, monomer.

It functions in the pathway secondary metabolite biosynthesis. Functionally, trans-enoyl reductase; part of the gene cluster that mediates the biosynthesis of oxopyrrolidines, polyketide-amino acid hybrid compounds with feature structures of tetramic acid. The polyketide chain is first assembled by the highly reducing PKS module of opdA using acetyl-CoA as the starter unit and five malonyl-CoA as the extender units. OpdC acts as a trans-acting enoyl reductase and reduces the terminal alkenyl to alkane. The 17R in oxopyrrolidine A and 15R, 17S in oxopyrrolidine B are generated by non-stereospecific catalysis of the ketoreductase (KR) domain and enoyl reductases. Then the polyketides with specific configurations are transferred to the NRPS module of opdA and linked to L-tyrosine to form an amide bond. Finally, the oxopyrrolidines are offloaded through a Dieckmann cyclization catalyzed by the terminal D domain to give a tetramic acid moiety. This chain is Trans-enoyl reductase opdC, found in Penicillium oxalicum (strain 114-2 / CGMCC 5302) (Penicillium decumbens).